The chain runs to 88 residues: Large ribosomal subunit protein bL27 (88 aa).

The interval methionine 1–lysine 24 is disordered.

It belongs to the bacterial ribosomal protein bL27 family.

The polypeptide is Large ribosomal subunit protein bL27 (Synechococcus sp. (strain CC9311)).